We begin with the raw amino-acid sequence, 187 residues long: Protein SCM4 (187 aa).

The next 3 membrane-spanning stretches (helical) occupy residues 11–31 (IAVS…VISI), 45–65 (VLCT…GAFG), and 80–100 (LLCG…VSLF). A compositionally biased stretch (basic and acidic residues) spans 114–134 (DLEKQKDEKLPQHHPEVKDGE). The disordered stretch occupies residues 114-135 (DLEKQKDEKLPQHHPEVKDGEA). Residues 162–182 (MSLHMSIVTGITIFTFGKCIL) form a helical membrane-spanning segment.

The protein belongs to the ATG33 family.

It is found in the membrane. The chain is Protein SCM4 (SCM4) from Saccharomyces cerevisiae (strain ATCC 204508 / S288c) (Baker's yeast).